We begin with the raw amino-acid sequence, 178 residues long: Large ribosomal subunit protein uL6 (178 aa).

It belongs to the universal ribosomal protein uL6 family. In terms of assembly, part of the 50S ribosomal subunit.

This protein binds to the 23S rRNA, and is important in its secondary structure. It is located near the subunit interface in the base of the L7/L12 stalk, and near the tRNA binding site of the peptidyltransferase center. This chain is Large ribosomal subunit protein uL6, found in Micrococcus luteus (Micrococcus lysodeikticus).